Here is a 348-residue protein sequence, read N- to C-terminus: Probable dual-specificity RNA methyltransferase RlmN (348 aa).

Residue Glu93 is the Proton acceptor of the active site. The Radical SAM core domain maps to 99–333 (TEKRLTACLS…VSFRKSRGLD (235 aa)). Cys106 and Cys338 are oxidised to a cystine. [4Fe-4S] cluster is bound by residues Cys113, Cys117, and Cys120. S-adenosyl-L-methionine is bound by residues 160-161 (GE), Ser190, 219-221 (SLH), and Asn295. Catalysis depends on Cys338, which acts as the S-methylcysteine intermediate.

Belongs to the radical SAM superfamily. RlmN family. The cofactor is [4Fe-4S] cluster.

It is found in the cytoplasm. It carries out the reaction adenosine(2503) in 23S rRNA + 2 reduced [2Fe-2S]-[ferredoxin] + 2 S-adenosyl-L-methionine = 2-methyladenosine(2503) in 23S rRNA + 5'-deoxyadenosine + L-methionine + 2 oxidized [2Fe-2S]-[ferredoxin] + S-adenosyl-L-homocysteine. The enzyme catalyses adenosine(37) in tRNA + 2 reduced [2Fe-2S]-[ferredoxin] + 2 S-adenosyl-L-methionine = 2-methyladenosine(37) in tRNA + 5'-deoxyadenosine + L-methionine + 2 oxidized [2Fe-2S]-[ferredoxin] + S-adenosyl-L-homocysteine. Its function is as follows. Specifically methylates position 2 of adenine 2503 in 23S rRNA and position 2 of adenine 37 in tRNAs. The protein is Probable dual-specificity RNA methyltransferase RlmN of Prochlorococcus marinus (strain MIT 9312).